The following is a 486-amino-acid chain: Protein DETOXIFICATION 53 (486 aa).

The next 12 helical transmembrane spans lie at 15–35, 45–65, 94–114, 130–150, 159–179, 187–207, 240–260, 267–287, 312–332, 346–366, 386–406, and 413–433; these read CPIV…MWFL, GGAL…KGLS, LLIV…PIFL, MLFF…RTFL, LTIS…VFVV, GVAI…LVYT, AISV…CGLL, VAAM…PFAI, VIGL…VTAL, ILGL…GNSP, VNLC…TFGF, and LWFG…YTLI. The disordered stretch occupies residues 448-474; sequence TSAAADKSHSEDETVHAEVQDDDDVSS. Basic and acidic residues predominate over residues 453–466; it reads DKSHSEDETVHAEV.

Belongs to the multi antimicrobial extrusion (MATE) (TC 2.A.66.1) family.

The protein localises to the membrane. In Arabidopsis thaliana (Mouse-ear cress), this protein is Protein DETOXIFICATION 53.